We begin with the raw amino-acid sequence, 558 residues long: Arginine--tRNA ligase (558 aa).

A 'HIGH' region motif is present at residues 119–129 (ANPNGPLHVGH).

Belongs to the class-I aminoacyl-tRNA synthetase family.

It is found in the cytoplasm. The catalysed reaction is tRNA(Arg) + L-arginine + ATP = L-arginyl-tRNA(Arg) + AMP + diphosphate. The chain is Arginine--tRNA ligase from Methanoregula boonei (strain DSM 21154 / JCM 14090 / 6A8).